A 281-amino-acid polypeptide reads, in one-letter code: Putative glutamine amidotransferase-like protein RP404 (281 aa).

The 263-residue stretch at 19–281 (KYTYADFPWY…KALVKASKYI (263 aa)) folds into the Glutamine amidotransferase type-1 domain. Residues 139–174 (RHFSKLTYSKKFECNTEAFATTVYTLPIKLEFENAP) enclose the RPE1 insert domain.

This Rickettsia prowazekii (strain Madrid E) protein is Putative glutamine amidotransferase-like protein RP404.